We begin with the raw amino-acid sequence, 89 residues long: Acylphosphatase (89 aa).

The 86-residue stretch at 4–89 (SRRFLVSGTV…EQPPEGFRVL (86 aa)) folds into the Acylphosphatase-like domain. Catalysis depends on residues Arg-19 and Asn-37.

Belongs to the acylphosphatase family.

The catalysed reaction is an acyl phosphate + H2O = a carboxylate + phosphate + H(+). The protein is Acylphosphatase (acyP) of Alkalilimnicola ehrlichii (strain ATCC BAA-1101 / DSM 17681 / MLHE-1).